The primary structure comprises 550 residues: Arginine--tRNA ligase (550 aa).

Positions Gly122 to His132 match the 'HIGH' region motif.

The protein belongs to the class-I aminoacyl-tRNA synthetase family. In terms of assembly, monomer.

Its subcellular location is the cytoplasm. The catalysed reaction is tRNA(Arg) + L-arginine + ATP = L-arginyl-tRNA(Arg) + AMP + diphosphate. The polypeptide is Arginine--tRNA ligase (Tropheryma whipplei (strain TW08/27) (Whipple's bacillus)).